We begin with the raw amino-acid sequence, 645 residues long: Phosphomethylpyrimidine synthase (645 aa).

The segment covering 1–12 (MSHNTVIPTTDI) has biased composition (polar residues). The tract at residues 1–25 (MSHNTVIPTTDISPKPDPARPRKAQ) is disordered. Substrate is bound by residues N253, M282, Y311, H347, 367–369 (SRG), 408–411 (DGLR), and E447. Residue H451 participates in Zn(2+) binding. Y474 is a binding site for substrate. Zn(2+) is bound at residue H515. [4Fe-4S] cluster contacts are provided by C595, C598, and C603.

It belongs to the ThiC family. Homodimer. [4Fe-4S] cluster serves as cofactor.

The catalysed reaction is 5-amino-1-(5-phospho-beta-D-ribosyl)imidazole + S-adenosyl-L-methionine = 4-amino-2-methyl-5-(phosphooxymethyl)pyrimidine + CO + 5'-deoxyadenosine + formate + L-methionine + 3 H(+). It participates in cofactor biosynthesis; thiamine diphosphate biosynthesis. Its function is as follows. Catalyzes the synthesis of the hydroxymethylpyrimidine phosphate (HMP-P) moiety of thiamine from aminoimidazole ribotide (AIR) in a radical S-adenosyl-L-methionine (SAM)-dependent reaction. The protein is Phosphomethylpyrimidine synthase of Photorhabdus laumondii subsp. laumondii (strain DSM 15139 / CIP 105565 / TT01) (Photorhabdus luminescens subsp. laumondii).